The sequence spans 508 residues: Histidine ammonia-lyase (508 aa).

Positions 139 to 141 form a cross-link, 5-imidazolinone (Ala-Gly); sequence ASG. Ser-140 bears the 2,3-didehydroalanine (Ser) mark.

Belongs to the PAL/histidase family. Contains an active site 4-methylidene-imidazol-5-one (MIO), which is formed autocatalytically by cyclization and dehydration of residues Ala-Ser-Gly.

It is found in the cytoplasm. It catalyses the reaction L-histidine = trans-urocanate + NH4(+). It participates in amino-acid degradation; L-histidine degradation into L-glutamate; N-formimidoyl-L-glutamate from L-histidine: step 1/3. In Acidiphilium cryptum (strain JF-5), this protein is Histidine ammonia-lyase.